A 90-amino-acid chain; its full sequence is U7-theraphotoxin-Hhn1l (90 aa).

Residues 1-19 (MKTAIFTVVLALAVFAVLS) form the signal peptide. Residues 20–50 (FGWEANEKALSEEFTELIHEKEAASETEARE) constitute a propeptide that is removed on maturation. Disulfide bonds link cysteine 51–cysteine 65, cysteine 58–cysteine 70, and cysteine 64–cysteine 81.

Belongs to the neurotoxin 10 (Hwtx-1) family. 13 (Hntx-13) subfamily. Expressed by the venom gland.

It localises to the secreted. In terms of biological role, ion channel inhibitor. In Cyriopagopus hainanus (Chinese bird spider), this protein is U7-theraphotoxin-Hhn1l.